The chain runs to 433 residues: Homeobox protein Hox-D3 (433 aa).

3 disordered regions span residues 44–198, 258–280, and 401–433; these read STPH…SKRV, GILH…AAGH, and HHGP…LTHL. Polar residues predominate over residues 58–74; sequence SLDSDYPSSACSIQSSA. Over residues 97 to 106 the composition is skewed to gly residues; it reads NSQGGGGGNQ. Residues 116–132 are compositionally biased toward pro residues; that stretch reads PPQPPPPPPPTLPPSSP. The span at 146–159 shows a compositional bias: low complexity; the sequence is GGLSASSSSSTISK. The Antp-type hexapeptide signature appears at 161–166; that stretch reads IFPWMK. A compositionally biased stretch (polar residues) spans 171-183; that stretch reads NSKQKNSCATSGE. The homeobox DNA-binding region spans 195–254; the sequence is SKRVRTAYTSAQLVELEKEFHFNRYLCRPRRVEMANLLNLTERQIKIWFQNRRMKYKKDQ.

It belongs to the Antp homeobox family. As to expression, detected in adult kidney, but not in other adult tissues tested.

It is found in the nucleus. Its function is as follows. Sequence-specific transcription factor which is part of a developmental regulatory system that provides cells with specific positional identities on the anterior-posterior axis. The chain is Homeobox protein Hox-D3 (Hoxd3) from Mus musculus (Mouse).